The chain runs to 591 residues: A-type ATP synthase subunit A (591 aa).

233-240 contributes to the ATP binding site; sequence GPFGSGKT.

Belongs to the ATPase alpha/beta chains family. As to quaternary structure, has multiple subunits with at least A(3), B(3), C, D, E, F, H, I and proteolipid K(x).

Its subcellular location is the cell membrane. It carries out the reaction ATP + H2O + 4 H(+)(in) = ADP + phosphate + 5 H(+)(out). Its function is as follows. Component of the A-type ATP synthase that produces ATP from ADP in the presence of a proton gradient across the membrane. The A chain is the catalytic subunit. This chain is A-type ATP synthase subunit A, found in Metallosphaera sedula (strain ATCC 51363 / DSM 5348 / JCM 9185 / NBRC 15509 / TH2).